The primary structure comprises 331 residues: UDP-glucose 4-epimerase (331 aa).

Residues 11-12 (YI), 31-36 (DNLITG), 51-52 (DI), 73-77 (FAAFS), Asn92, Thr117, Tyr141, Lys145, and Phe169 each bind NAD(+). Residues Thr117 and Tyr141 each coordinate substrate. Tyr141 serves as the catalytic Proton acceptor. Residues Asn170, 189–190 (HI), 206–208 (QIY), Arg221, and 282–285 (RAGD) contribute to the substrate site.

Belongs to the NAD(P)-dependent epimerase/dehydratase family. As to quaternary structure, homodimer. NAD(+) is required as a cofactor.

The enzyme catalyses UDP-alpha-D-glucose = UDP-alpha-D-galactose. It participates in carbohydrate metabolism; galactose metabolism. This is UDP-glucose 4-epimerase (galE) from Lacticaseibacillus casei (Lactobacillus casei).